The sequence spans 149 residues: Deoxyuridine 5'-triphosphate nucleotidohydrolase (149 aa).

Residues 65 to 67 (RSG), Asn-78, 82 to 84 (TID), and Lys-92 contribute to the substrate site.

This sequence belongs to the dUTPase family. The cofactor is Mg(2+).

The catalysed reaction is dUTP + H2O = dUMP + diphosphate + H(+). The protein operates within pyrimidine metabolism; dUMP biosynthesis; dUMP from dCTP (dUTP route): step 2/2. Its function is as follows. This enzyme is involved in nucleotide metabolism: it produces dUMP, the immediate precursor of thymidine nucleotides and it decreases the intracellular concentration of dUTP so that uracil cannot be incorporated into DNA. This Chlorobium chlorochromatii (strain CaD3) protein is Deoxyuridine 5'-triphosphate nucleotidohydrolase.